The following is a 158-amino-acid chain: NAD(P)H-quinone oxidoreductase subunit J, chloroplastic (158 aa).

It belongs to the complex I 30 kDa subunit family. In terms of assembly, NDH is composed of at least 16 different subunits, 5 of which are encoded in the nucleus.

Its subcellular location is the plastid. The protein resides in the chloroplast thylakoid membrane. The enzyme catalyses a plastoquinone + NADH + (n+1) H(+)(in) = a plastoquinol + NAD(+) + n H(+)(out). It carries out the reaction a plastoquinone + NADPH + (n+1) H(+)(in) = a plastoquinol + NADP(+) + n H(+)(out). In terms of biological role, NDH shuttles electrons from NAD(P)H:plastoquinone, via FMN and iron-sulfur (Fe-S) centers, to quinones in the photosynthetic chain and possibly in a chloroplast respiratory chain. The immediate electron acceptor for the enzyme in this species is believed to be plastoquinone. Couples the redox reaction to proton translocation, and thus conserves the redox energy in a proton gradient. This Olimarabidopsis pumila (Dwarf rocket) protein is NAD(P)H-quinone oxidoreductase subunit J, chloroplastic.